The following is a 319-amino-acid chain: Bidirectional sugar transporter SWEET15 (319 aa).

The Extracellular portion of the chain corresponds to 1–10 (MAFMSMERST). The chain crosses the membrane as a helical span at residues 11–31 (WAFTFGILGNLISLMVFLSPL). In terms of domain architecture, MtN3/slv 1 spans 13-99 (FTFGILGNLI…AMYLAYAPKS (87 aa)). Residues 32-50 (PTFYRVYRKKSTEGFQSTP) lie on the Cytoplasmic side of the membrane. The chain crosses the membrane as a helical span at residues 51-71 (YVVTLFSCMLWMYYAFVKSGA). A topological domain (extracellular) is located at residue Glu-72. A helical transmembrane segment spans residues 73-93 (LLVTINGVGCVIETVYLAMYL). Residues 94 to 106 (AYAPKSARMLTAK) lie on the Cytoplasmic side of the membrane. A helical transmembrane segment spans residues 107 to 127 (MLLGLNIGLFGVIALVTLLLS). The Extracellular portion of the chain corresponds to 128–134 (RGELRVH). A helical transmembrane segment spans residues 135–155 (VLGWICVAVSLSVFAAPLSII). The MtN3/slv 2 domain occupies 135–219 (VLGWICVAVS…ALYMAYRSKK (85 aa)). Over 156–167 (RLVIRTKSVEFM) the chain is Cytoplasmic. Residues 168–188 (PFSLSFFLVLSAVIWFLYGLL) traverse the membrane as a helical segment. Residues 189–191 (KKD) lie on the Extracellular side of the membrane. A helical membrane pass occupies residues 192–212 (VFVALPNVLGFVFGVAQMALY). The Cytoplasmic segment spans residues 213 to 319 (MAYRSKKPLV…KPDMAIVVEV (107 aa)).

Belongs to the SWEET sugar transporter family. In terms of assembly, forms homooligomers and/or heterooligomers.

The protein resides in the cell membrane. Mediates both low-affinity uptake and efflux of sugar across the plasma membrane. Functionally, confers blight susceptibility. Confers TAL effector-mediated susceptibility to Xanthomonas oryzae pv. oryzae. This Oryza sativa subsp. japonica (Rice) protein is Bidirectional sugar transporter SWEET15 (SWEET15).